The chain runs to 864 residues: N-alpha-acetyltransferase 16, NatA auxiliary subunit (864 aa).

TPR repeat units follow at residues 46–79, 80–113, 148–184, 224–257, 374–407, 409–441, and 485–518; these read GETLAMKGLTLNCLGKKEEAYEFVRKGLRNDVKS, HVCWHVYGLLQRSDKKYDEAIKCYRNALKLDKDN, RASWIGYAIAYHLLKDYDMALKLLEEFRQTQQVPPNK, LLVEEIKGEILLKLGRLKEASEVFKNLIDRNAEN, LWVQYFLAQHFDKLGQYSLALDYINAAIASTPTL, ELFYMKAKIYKHIGNLKEAAKWMDEAQSLDTAD, and MWFQTECISAYQRLGRYGDALKKCHEVERHFFEI. The segment at 603–638 is disordered; it reads QKKAKLEEERKHAERERQQKNQKKKRDEEEEEASGL. Basic and acidic residues predominate over residues 606–621; the sequence is AKLEEERKHAERERQQ.

In terms of assembly, component of the N-terminal acetyltransferase A (NatA) complex composed of NAA10 and NAA16.

Functionally, auxillary subunit of the N-terminal acetyltransferase A (NatA) complex which displays alpha (N-terminal) acetyltransferase activity. The polypeptide is N-alpha-acetyltransferase 16, NatA auxiliary subunit (NAA16) (Homo sapiens (Human)).